The sequence spans 263 residues: 2-dehydro-3-deoxyphosphooctonate aldolase (263 aa).

It belongs to the KdsA family.

It is found in the cytoplasm. The enzyme catalyses D-arabinose 5-phosphate + phosphoenolpyruvate + H2O = 3-deoxy-alpha-D-manno-2-octulosonate-8-phosphate + phosphate. It participates in carbohydrate biosynthesis; 3-deoxy-D-manno-octulosonate biosynthesis; 3-deoxy-D-manno-octulosonate from D-ribulose 5-phosphate: step 2/3. The protein operates within bacterial outer membrane biogenesis; lipopolysaccharide biosynthesis. The protein is 2-dehydro-3-deoxyphosphooctonate aldolase of Wolinella succinogenes (strain ATCC 29543 / DSM 1740 / CCUG 13145 / JCM 31913 / LMG 7466 / NCTC 11488 / FDC 602W) (Vibrio succinogenes).